Reading from the N-terminus, the 973-residue chain is Probable outer membrane protein pmp13 (973 aa).

A signal peptide spans 1-24 (MKTSIRKFLISTTLAPCFASTAFT). A compositionally biased stretch (polar residues) spans 284–293 (QNNTASPQNS). A disordered region spans residues 284-303 (QNNTASPQNSLPAPTPPPTP). The 283-residue stretch at 691–973 (EDVPGKQLSI…TLDIGSKLRF (283 aa)) folds into the Autotransporter domain.

The protein belongs to the PMP outer membrane protein family.

The protein localises to the secreted. Its subcellular location is the cell wall. It localises to the cell outer membrane. This is Probable outer membrane protein pmp13 (pmp13) from Chlamydia pneumoniae (Chlamydophila pneumoniae).